Reading from the N-terminus, the 116-residue chain is Aspartate 1-decarboxylase (116 aa).

Residue Ser-25 is the Schiff-base intermediate with substrate; via pyruvic acid of the active site. The residue at position 25 (Ser-25) is a Pyruvic acid (Ser). Substrate is bound at residue Thr-57. Tyr-58 acts as the Proton donor in catalysis. Position 73–75 (73–75 (GPA)) interacts with substrate.

Belongs to the PanD family. In terms of assembly, heterooctamer of four alpha and four beta subunits. It depends on pyruvate as a cofactor. In terms of processing, is synthesized initially as an inactive proenzyme, which is activated by self-cleavage at a specific serine bond to produce a beta-subunit with a hydroxyl group at its C-terminus and an alpha-subunit with a pyruvoyl group at its N-terminus.

Its subcellular location is the cytoplasm. It catalyses the reaction L-aspartate + H(+) = beta-alanine + CO2. It participates in cofactor biosynthesis; (R)-pantothenate biosynthesis; beta-alanine from L-aspartate: step 1/1. Its function is as follows. Catalyzes the pyruvoyl-dependent decarboxylation of aspartate to produce beta-alanine. The sequence is that of Aspartate 1-decarboxylase from Flavobacterium psychrophilum (strain ATCC 49511 / DSM 21280 / CIP 103535 / JIP02/86).